Here is a 449-residue protein sequence, read N- to C-terminus: Putative BTB/POZ domain-containing protein L742 (449 aa).

Residues 79-148 enclose the BTB domain; it reads EDGYVYINIG…LTMSNQELSG (70 aa).

It belongs to the mimivirus BTB/WD family.

The chain is Putative BTB/POZ domain-containing protein L742 from Acanthamoeba polyphaga mimivirus (APMV).